The sequence spans 151 residues: Transcriptional regulator MraZ (151 aa).

SpoVT-AbrB domains are found at residues 5-52 (ATAV…PLMN) and 81-124 (ATEC…SDVE).

This sequence belongs to the MraZ family. As to quaternary structure, forms oligomers.

It is found in the cytoplasm. The protein resides in the nucleoid. This is Transcriptional regulator MraZ from Haemophilus influenzae (strain PittGG).